A 1556-amino-acid polypeptide reads, in one-letter code: Ras guanine nucleotide exchange factor G (1556 aa).

Disordered regions lie at residues 19-63 (IGNI…KNRG), 93-141 (LQLN…SSTT), 163-239 (SHVT…LSPS), and 254-296 (ATDS…NNNS). 2 stretches are compositionally biased toward low complexity: residues 25-54 (NNNN…SGSN) and 96-141 (NDTD…SSTT). Residues 170–186 (DDDDDDESSSSEEDFDS) are compositionally biased toward acidic residues. The segment covering 196-216 (TSSTTATTTTTTTSVSPLTSS) has biased composition (low complexity). Positions 256 to 271 (DSDNQSLEPCNNKTIV) are enriched in polar residues. Positions 279 to 295 (DNNNNHNNNNNNNNNNN) are enriched in low complexity. The F-box 1 domain occupies 307-353 (NKTFLDLDEKIYLKIFGYLFAEDLCSINRVSKHLCNIINNQQLWKDL). Positions 385–416 (NNNNNNNNNNNNNNNNSNISNNNNNINNSNGN) are disordered. The F-box 2 domain maps to 679–726 (VFDISRVSDILLIKIFRNLDSIKDLSVCQRVSKRWNKAIAISSLWEQL). 2 disordered regions span residues 762 to 815 (QPSP…NGLN) and 827 to 1101 (GSNL…ITNN). Positions 827 to 848 (GSNLSNGGNSGSSFSPFNPLSG) are enriched in low complexity. Residues 849 to 866 (SNGGSSFGPFGSGGGGGS) are compositionally biased toward gly residues. Low complexity-rich tracts occupy residues 867–880 (NSNI…LNSS) and 888–910 (FLAM…TIST). Polar residues predominate over residues 911-935 (NCTPTGGSTTNSPNFQSPMVSSSTV). Composition is skewed to low complexity over residues 943–957 (SPNL…ISLS) and 972–1053 (PDSS…IQPI). Over residues 1059–1076 (VNNNGSQSDLSKISDLNA) the composition is skewed to polar residues. Low complexity predominate over residues 1077–1101 (NPNTTTTTTTNTIESSSSSSSITNN). Residues 1116 to 1244 (MINVQKLMNL…LIRSFSRKLS (129 aa)) form the N-terminal Ras-GEF domain. Residues 1254-1279 (IGITGGKSSRKGGGSGSGSGSGGGSG) are disordered. A compositionally biased stretch (gly residues) spans 1264 to 1279 (KGGGSGSGSGSGGGSG). One can recognise a Ras-GEF domain in the interval 1317–1548 (PAEEIAKQLT…YRVSMQREPR (232 aa)).

Promotes the exchange of Ras-bound GDP by GTP. The polypeptide is Ras guanine nucleotide exchange factor G (gefG) (Dictyostelium discoideum (Social amoeba)).